A 202-amino-acid polypeptide reads, in one-letter code: Coiled-coil domain-containing protein 69 (202 aa).

The span at 1 to 11 (MGCRQSRHSRG) shows a compositional bias: basic residues. Disordered regions lie at residues 1 to 20 (MGCR…VEET) and 32 to 52 (GRIL…SNAQ). Residue G2 is the site of N-myristoyl glycine attachment. Positions 32 to 42 (GRILEGRHEEA) are enriched in basic and acidic residues. S92 carries the phosphoserine modification. Residues 112 to 146 (WEQELESLHHVIEMKNERIHELEKQLFLLEMLKEK) are a coiled coil.

It belongs to the CCDC69 family.

It is found in the cytoplasm. It localises to the cytoskeleton. The protein localises to the spindle. The protein resides in the midbody. Its function is as follows. May act as a scaffold to regulate the recruitment and assembly of spindle midzone components. Required for the localization of AURKB and PLK1 to the spindle midzone. This Mus musculus (Mouse) protein is Coiled-coil domain-containing protein 69 (Ccdc69).